The chain runs to 91 residues: Small ribosomal subunit protein uS19 (91 aa).

Belongs to the universal ribosomal protein uS19 family.

Functionally, protein S19 forms a complex with S13 that binds strongly to the 16S ribosomal RNA. This is Small ribosomal subunit protein uS19 from Bordetella bronchiseptica (strain ATCC BAA-588 / NCTC 13252 / RB50) (Alcaligenes bronchisepticus).